Here is a 318-residue protein sequence, read N- to C-terminus: Biotin synthase (318 aa).

One can recognise a Radical SAM core domain in the interval 46 to 272 (DGVDVEQLNN…RSVVKISGGR (227 aa)). Residues cysteine 61, cysteine 65, and cysteine 68 each coordinate [4Fe-4S] cluster. Cysteine 105, cysteine 138, cysteine 197, and lysine 267 together coordinate [2Fe-2S] cluster.

Belongs to the radical SAM superfamily. Biotin synthase family. As to quaternary structure, homodimer. The cofactor is [4Fe-4S] cluster. [2Fe-2S] cluster serves as cofactor.

It carries out the reaction (4R,5S)-dethiobiotin + (sulfur carrier)-SH + 2 reduced [2Fe-2S]-[ferredoxin] + 2 S-adenosyl-L-methionine = (sulfur carrier)-H + biotin + 2 5'-deoxyadenosine + 2 L-methionine + 2 oxidized [2Fe-2S]-[ferredoxin]. It participates in cofactor biosynthesis; biotin biosynthesis; biotin from 7,8-diaminononanoate: step 2/2. In terms of biological role, catalyzes the conversion of dethiobiotin (DTB) to biotin by the insertion of a sulfur atom into dethiobiotin via a radical-based mechanism. The chain is Biotin synthase from Cenarchaeum symbiosum (strain A).